We begin with the raw amino-acid sequence, 338 residues long: Ketol-acid reductoisomerase (NADP(+)) (338 aa).

The KARI N-terminal Rossmann domain maps to 1-181; the sequence is MKVFYDKDCD…GGGKAGIIET (181 aa). NADP(+) contacts are provided by residues 24-27, Arg-47, and Ser-52; that span reads YGSQ. Residue His-107 is part of the active site. Residue Gly-133 participates in NADP(+) binding. Residues 182-327 form the KARI C-terminal knotted domain; the sequence is NFREETETDL…GKLRAMMPWI (146 aa). Residues Asp-190, Glu-194, Glu-226, and Glu-230 each contribute to the Mg(2+) site. Ser-251 serves as a coordination point for substrate.

This sequence belongs to the ketol-acid reductoisomerase family. Mg(2+) is required as a cofactor.

The enzyme catalyses (2R)-2,3-dihydroxy-3-methylbutanoate + NADP(+) = (2S)-2-acetolactate + NADPH + H(+). It carries out the reaction (2R,3R)-2,3-dihydroxy-3-methylpentanoate + NADP(+) = (S)-2-ethyl-2-hydroxy-3-oxobutanoate + NADPH + H(+). The protein operates within amino-acid biosynthesis; L-isoleucine biosynthesis; L-isoleucine from 2-oxobutanoate: step 2/4. It participates in amino-acid biosynthesis; L-valine biosynthesis; L-valine from pyruvate: step 2/4. Involved in the biosynthesis of branched-chain amino acids (BCAA). Catalyzes an alkyl-migration followed by a ketol-acid reduction of (S)-2-acetolactate (S2AL) to yield (R)-2,3-dihydroxy-isovalerate. In the isomerase reaction, S2AL is rearranged via a Mg-dependent methyl migration to produce 3-hydroxy-3-methyl-2-ketobutyrate (HMKB). In the reductase reaction, this 2-ketoacid undergoes a metal-dependent reduction by NADPH to yield (R)-2,3-dihydroxy-isovalerate. The chain is Ketol-acid reductoisomerase (NADP(+)) from Polaromonas naphthalenivorans (strain CJ2).